We begin with the raw amino-acid sequence, 138 residues long: Large ribosomal subunit protein uL16 (138 aa).

A compositionally biased stretch (basic residues) spans 1 to 13 (MLQPARRKYRKEQ). The segment at 1 to 20 (MLQPARRKYRKEQKGRNTGV) is disordered.

Belongs to the universal ribosomal protein uL16 family. In terms of assembly, part of the 50S ribosomal subunit.

Binds 23S rRNA and is also seen to make contacts with the A and possibly P site tRNAs. This is Large ribosomal subunit protein uL16 from Verminephrobacter eiseniae (strain EF01-2).